Reading from the N-terminus, the 99-residue chain is uncharacterized protein (99 aa).

This is an uncharacterized protein from Methanocaldococcus jannaschii (strain ATCC 43067 / DSM 2661 / JAL-1 / JCM 10045 / NBRC 100440) (Methanococcus jannaschii).